The chain runs to 859 residues: Leucine--tRNA ligase (859 aa).

The short motif at 42-52 (PYPSGKLHVGH) is the 'HIGH' region element. The 'KMSKS' region signature appears at 611 to 615 (KMSKS). Lysine 614 contributes to the ATP binding site.

This sequence belongs to the class-I aminoacyl-tRNA synthetase family.

It is found in the cytoplasm. The catalysed reaction is tRNA(Leu) + L-leucine + ATP = L-leucyl-tRNA(Leu) + AMP + diphosphate. This Fusobacterium nucleatum subsp. nucleatum (strain ATCC 25586 / DSM 15643 / BCRC 10681 / CIP 101130 / JCM 8532 / KCTC 2640 / LMG 13131 / VPI 4355) protein is Leucine--tRNA ligase.